A 205-amino-acid polypeptide reads, in one-letter code: Photosystem I assembly protein Ycf4 (205 aa).

A run of 2 helical transmembrane segments spans residues 23-43 (WATV…SSYI) and 86-106 (LMCF…CLIF).

Belongs to the Ycf4 family.

The protein resides in the plastid. It localises to the chloroplast thylakoid membrane. Seems to be required for the assembly of the photosystem I complex. In Tetradesmus obliquus (Green alga), this protein is Photosystem I assembly protein Ycf4.